We begin with the raw amino-acid sequence, 523 residues long: 2-isopropylmalate synthase (523 aa).

The region spanning V5–H267 is the Pyruvate carboxyltransferase domain. 4 residues coordinate Mn(2+): D14, H202, H204, and N238. Residues K392–V523 form a regulatory domain region.

The protein belongs to the alpha-IPM synthase/homocitrate synthase family. LeuA type 1 subfamily. As to quaternary structure, homodimer. Mn(2+) serves as cofactor.

The protein localises to the cytoplasm. It carries out the reaction 3-methyl-2-oxobutanoate + acetyl-CoA + H2O = (2S)-2-isopropylmalate + CoA + H(+). It functions in the pathway amino-acid biosynthesis; L-leucine biosynthesis; L-leucine from 3-methyl-2-oxobutanoate: step 1/4. Catalyzes the condensation of the acetyl group of acetyl-CoA with 3-methyl-2-oxobutanoate (2-ketoisovalerate) to form 3-carboxy-3-hydroxy-4-methylpentanoate (2-isopropylmalate). In Shewanella sediminis (strain HAW-EB3), this protein is 2-isopropylmalate synthase.